The following is a 316-amino-acid chain: Neuroguidin-B (316 aa).

Disordered stretches follow at residues 124 to 169 and 292 to 316; these read ENDP…SKVK and VPFMKKSKKGPKKSKKKKGFSRRRH. Over residues 145–156 the composition is skewed to acidic residues; that stretch reads DERESDSGEEGA. The span at 296-316 shows a compositional bias: basic residues; sequence KKSKKGPKKSKKKKGFSRRRH.

Belongs to the SAS10 family. As to quaternary structure, part of the small subunit (SSU) processome, composed of more than 70 proteins and the RNA chaperone small nucleolar RNA (snoRNA) U3.

Its subcellular location is the nucleus. It is found in the nucleolus. The protein localises to the chromosome. The protein resides in the centromere. It localises to the cytoplasm. Its subcellular location is the cell projection. It is found in the axon. The protein localises to the dendrite. The protein resides in the filopodium. Part of the small subunit (SSU) processome, first precursor of the small eukaryotic ribosomal subunit. During the assembly of the SSU processome in the nucleolus, many ribosome biogenesis factors, an RNA chaperone and ribosomal proteins associate with the nascent pre-rRNA and work in concert to generate RNA folding, modifications, rearrangements and cleavage as well as targeted degradation of pre-ribosomal RNA by the RNA exosome. Its dissociation from the complex determines the transition from state pre-A1 to state pre-A1*. May inhibit mRNA translation. The chain is Neuroguidin-B (ngdn-b) from Xenopus laevis (African clawed frog).